We begin with the raw amino-acid sequence, 337 residues long: 5-dehydro-2-deoxygluconokinase (337 aa).

Belongs to the carbohydrate kinase PfkB family.

It catalyses the reaction 5-dehydro-2-deoxy-D-gluconate + ATP = 6-phospho-5-dehydro-2-deoxy-D-gluconate + ADP + H(+). Its pathway is polyol metabolism; myo-inositol degradation into acetyl-CoA; acetyl-CoA from myo-inositol: step 5/7. Its function is as follows. Catalyzes the phosphorylation of 5-dehydro-2-deoxy-D-gluconate (2-deoxy-5-keto-D-gluconate or DKG) to 6-phospho-5-dehydro-2-deoxy-D-gluconate (DKGP). In Geobacillus thermodenitrificans (strain NG80-2), this protein is 5-dehydro-2-deoxygluconokinase.